The chain runs to 326 residues: Vitamin B12 import system permease protein BtuC (326 aa).

9 helical membrane passes run Trp15–Glu35, Leu61–Phe81, Pro88–Gly108, Leu112–Leu132, Leu146–Phe166, Gly184–Ile204, Gly240–Ile260, Val274–Ala294, and Glu302–Leu322.

This sequence belongs to the binding-protein-dependent transport system permease family. FecCD subfamily. The complex is composed of two ATP-binding proteins (BtuD), two transmembrane proteins (BtuC) and a solute-binding protein (BtuF).

The protein localises to the cell inner membrane. In terms of biological role, part of the ABC transporter complex BtuCDF involved in vitamin B12 import. Involved in the translocation of the substrate across the membrane. The chain is Vitamin B12 import system permease protein BtuC from Escherichia coli O9:H4 (strain HS).